Here is a 273-residue protein sequence, read N- to C-terminus: HMP-PP phosphatase (273 aa).

Asp8 serves as the catalytic Nucleophile. Mg(2+)-binding residues include Asp8, Asp10, and Asp212.

This sequence belongs to the HAD-like hydrolase superfamily. Cof family. It depends on Mg(2+) as a cofactor.

It catalyses the reaction 4-amino-2-methyl-5-(diphosphooxymethyl)pyrimidine + H2O = 4-amino-2-methyl-5-(phosphooxymethyl)pyrimidine + phosphate + H(+). Catalyzes the hydrolysis of 4-amino-2-methyl-5-hydroxymethylpyrimidine pyrophosphate (HMP-PP) to 4-amino-2-methyl-5-hydroxymethylpyrimidine phosphate (HMP-P). The chain is HMP-PP phosphatase from Yersinia pestis bv. Antiqua (strain Antiqua).